Reading from the N-terminus, the 341-residue chain is CD2 antigen cytoplasmic tail-binding protein 2 (341 aa).

Residues 1–66 form a disordered region; sequence MPKRKVTFQG…DGGSSKYDIL (66 aa). Lysine 26 participates in a covalent cross-link: Glycyl lysine isopeptide (Lys-Gly) (interchain with G-Cter in SUMO2). An N6-acetyllysine modification is found at lysine 44. Residues serine 46, serine 49, and serine 118 each carry the phosphoserine modification. A compositionally biased stretch (acidic residues) spans 49–58; it reads SDEEEDDDDG. Disordered regions lie at residues 131 to 151 and 178 to 199; these read RPPGQRQASDSEEEDSLGQTS and LGARGGGKGRKGPGQPSSPQRL. 2 positions are modified to phosphoserine: serine 194 and serine 195. The GYF domain occupies 280–338; it reads DVMWEYKWENTGDAELYGPFTSAQMQTWVSEGYFPDGVYCRKLDPPGGQFYNSKRIDFD.

Component of the U5 snRNP complex composed of the U5 snRNA and at least PRPF6, PRPF8, SNRNP200, EFTUD2, SNRNP40, DDX23, TXNL4A and CD2BP2. Interacts directly with TXNL4A and PRPF6. Interacts (via GYF domain) with CD2 (via Pro-rich sequence in the cytoplasmic domain). Interacts with PQBP1.

It is found in the cytoplasm. The protein localises to the nucleus. In terms of biological role, involved in pre-mRNA splicing as component of the U5 snRNP complex that is involved in spliceosome assembly. In Homo sapiens (Human), this protein is CD2 antigen cytoplasmic tail-binding protein 2 (CD2BP2).